The chain runs to 115 residues: Large ribosomal subunit protein bL20 (115 aa).

The protein belongs to the bacterial ribosomal protein bL20 family.

Functionally, binds directly to 23S ribosomal RNA and is necessary for the in vitro assembly process of the 50S ribosomal subunit. It is not involved in the protein synthesizing functions of that subunit. This chain is Large ribosomal subunit protein bL20 (rplT), found in Borreliella burgdorferi (strain ATCC 35210 / DSM 4680 / CIP 102532 / B31) (Borrelia burgdorferi).